A 201-amino-acid polypeptide reads, in one-letter code: Imidazole glycerol phosphate synthase subunit HisH 1 (201 aa).

The region spanning 1-201 (MIALIDYKAG…LKLLENFIRL (201 aa)) is the Glutamine amidotransferase type-1 domain. Cysteine 80 (nucleophile) is an active-site residue. Catalysis depends on residues histidine 183 and glutamate 185.

In terms of assembly, heterodimer of HisH and HisF.

It is found in the cytoplasm. The enzyme catalyses 5-[(5-phospho-1-deoxy-D-ribulos-1-ylimino)methylamino]-1-(5-phospho-beta-D-ribosyl)imidazole-4-carboxamide + L-glutamine = D-erythro-1-(imidazol-4-yl)glycerol 3-phosphate + 5-amino-1-(5-phospho-beta-D-ribosyl)imidazole-4-carboxamide + L-glutamate + H(+). The catalysed reaction is L-glutamine + H2O = L-glutamate + NH4(+). It functions in the pathway amino-acid biosynthesis; L-histidine biosynthesis; L-histidine from 5-phospho-alpha-D-ribose 1-diphosphate: step 5/9. Functionally, IGPS catalyzes the conversion of PRFAR and glutamine to IGP, AICAR and glutamate. The HisH subunit provides the glutamine amidotransferase activity that produces the ammonia necessary to HisF for the synthesis of IGP and AICAR. The protein is Imidazole glycerol phosphate synthase subunit HisH 1 of Campylobacter jejuni (strain RM1221).